A 354-amino-acid polypeptide reads, in one-letter code: Selection and upkeep of intraepithelial T-cells protein 10 (354 aa).

Positions 1–52 are cleaved as a signal peptide; it reads MFLRTQMEQSQADIFALIKPHFGVMESSASYLPGFFMTFLLLQTTVLTQAMS. The 89-residue stretch at 53-141 folds into the Ig-like V-type domain; the sequence is LDIQINIQVP…TNREKKRSVV (89 aa). Over 53–158 the chain is Extracellular; that stretch reads LDIQINIQVP…SEYMSLMSNK (106 aa). An intrachain disulfide couples cysteine 71 to cysteine 125. Residue asparagine 129 is glycosylated (N-linked (GlcNAc...) asparagine). The chain crosses the membrane as a helical span at residues 159–179; the sequence is FSCPLTYLFIIIFLNCLKGML. Residues 180–209 lie on the Cytoplasmic side of the membrane; it reads DFCCLKGKPVYFRELINKIKEVLNIKMRAC. Residues 210-230 form a helical membrane-spanning segment; it reads CTLIWEFLLIVLYIAFLPFYL. Over 231 to 252 the chain is Extracellular; the sequence is KFRSRASILDDAYPLHSNWLWD. Residues 253 to 273 form a helical membrane-spanning segment; that stretch reads ICIVLSVLMIFFTGLSLFLLW. The Cytoplasmic segment spans residues 274–354; it reads TLNCYGQMSY…RLDCSLNWKT (81 aa).

Belongs to the SKINT family. As to expression, expressed in skin and thymus.

The protein localises to the membrane. In terms of biological role, may act by engaging a cell surface molecule on immature T-cells in the embryonic thymus. The protein is Selection and upkeep of intraepithelial T-cells protein 10 (Skint10) of Mus musculus (Mouse).